Consider the following 711-residue polypeptide: Double-stranded RNA-specific editase 1 (711 aa).

The segment at 1-78 (MDIEDEENMS…KRRKTPGPVL (78 aa)) is disordered. A compositionally biased stretch (basic residues) spans 63-73 (SKYRLKKRRKT). A DRBM 1 domain is found at 78 to 144 (LPKNALMQLN…AEKALRSFVQ (67 aa)). Interaction with substrate RNA regions lie at residues 83–88 (LMQLNE) and 104–105 (VH). The residue at position 149 (Ser149) is a Phosphoserine. The disordered stretch occupies residues 176 to 220 (LFNGFETPDKSEPPFYVGSNGDDSFSSSGDVSLSASPVPASLTQP). Over residues 192-213 (VGSNGDDSFSSSGDVSLSASPV) the composition is skewed to low complexity. Residues 231-298 (PSGKNPVMIL…AQSALATVFN (68 aa)) form the DRBM 2 domain. 2 interaction with substrate RNA regions span residues 237–242 (VMILNE) and His259. Residues 370–707 (SVSTGTKCIN…VEKPTEQDQF (338 aa)) enclose the A to I editase domain. His394 contributes to the Zn(2+) binding site. Glu396 functions as the Proton donor in the catalytic mechanism. 2 residues coordinate 1D-myo-inositol hexakisphosphate: Arg400 and Arg401. Residues Cys451 and Cys526 each contribute to the Zn(2+) site. 1D-myo-inositol hexakisphosphate is bound by residues Lys529, Arg532, Lys639, Lys672, Lys682, and Lys700.

In terms of assembly, homodimer. Homodimerization is essential for its catalytic activity. Can form heterodimers with isoform 5 of ADAR/ADAR1. The cofactor is 1D-myo-inositol hexakisphosphate.

It localises to the nucleus. The protein localises to the nucleolus. The catalysed reaction is adenosine in double-stranded RNA + H2O + H(+) = inosine in double-stranded RNA + NH4(+). Functionally, catalyzes the hydrolytic deamination of adenosine to inosine in double-stranded RNA (dsRNA) referred to as A-to-I RNA editing. This may affect gene expression and function in a number of ways that include mRNA translation by changing codons and hence the amino acid sequence of proteins; pre-mRNA splicing by altering splice site recognition sequences; RNA stability by changing sequences involved in nuclease recognition; genetic stability in the case of RNA virus genomes by changing sequences during viral RNA replication; and RNA structure-dependent activities such as microRNA production or targeting or protein-RNA interactions. Can edit both viral and cellular RNAs and can edit RNAs at multiple sites (hyper-editing) or at specific sites (site-specific editing). Its cellular RNA substrates include: bladder cancer-associated protein (BLCAP), neurotransmitter receptors for glutamate (GRIA2 and GRIK2) and serotonin (HTR2C), GABA receptor (GABRA3) and potassium voltage-gated channel (KCNA1). Site-specific RNA editing of transcripts encoding these proteins results in amino acid substitutions which consequently alter their functional activities. Edits GRIA2 at both the Q/R and R/G sites efficiently but converts the adenosine in hotspot1 much less efficiently. Can inhibit cell proliferation and migration and can stimulate exocytosis. The chain is Double-stranded RNA-specific editase 1 (Adarb1) from Mus musculus (Mouse).